The primary structure comprises 316 residues: Probable cell division protein WhiA (316 aa).

The segment at residues 275–309 (TLKELGEMVSGGKISKSGINHRLRKIDEIAEKLRA) is a DNA-binding region (H-T-H motif).

This sequence belongs to the WhiA family.

Involved in cell division and chromosome segregation. The chain is Probable cell division protein WhiA from Bacillus mycoides (strain KBAB4) (Bacillus weihenstephanensis).